A 219-amino-acid chain; its full sequence is MSDDLVKILVLGPSKSGKSTVTNFLAGTRDTPTKEYHETNPLRVLEVEIALDDTRRSGRQAAGLKKAVVQLWDVGGSSKHQAGWPAIASNADGIIYVFNPEVKGSEKELLLWYKNFALNQDELDDDNNFKMRVTDGHSLIFSHHSSLPEFAVGDNAIPPMPKQLQGIRALETSLDYQSDNFKEAFDALVEQIIASRLAAEENDLLQKEREAKDYPRLKR.

GTP-binding positions include 12 to 19 (GPSKSGKS) and 72 to 79 (WDVGGSSK).

This sequence belongs to the small GTPase superfamily. Rab family.

The protein resides in the cytoplasm. Its subcellular location is the cytoskeleton. It is found in the flagellum basal body. It localises to the cell projection. The protein localises to the cilium. The protein resides in the flagellum. In terms of biological role, required for flagellum formation. The protein is Intraflagellar transport protein 22 (IFT22) of Trypanosoma brucei brucei (strain 927/4 GUTat10.1).